We begin with the raw amino-acid sequence, 285 residues long: Probable endonuclease 4 (285 aa).

Residues H69, H109, E145, D179, H182, H216, D229, H231, and E261 each contribute to the Zn(2+) site.

This sequence belongs to the AP endonuclease 2 family. The cofactor is Zn(2+).

It catalyses the reaction Endonucleolytic cleavage to 5'-phosphooligonucleotide end-products.. Its function is as follows. Endonuclease IV plays a role in DNA repair. It cleaves phosphodiester bonds at apurinic or apyrimidinic (AP) sites, generating a 3'-hydroxyl group and a 5'-terminal sugar phosphate. The chain is Probable endonuclease 4 from Escherichia fergusonii (strain ATCC 35469 / DSM 13698 / CCUG 18766 / IAM 14443 / JCM 21226 / LMG 7866 / NBRC 102419 / NCTC 12128 / CDC 0568-73).